A 449-amino-acid chain; its full sequence is Probable glycosyltransferase 5 (449 aa).

Residues 1–14 (MMEKHGGKVTSDRR) show a composition bias toward basic and acidic residues. Residues 1 to 24 (MMEKHGGKVTSDRRAGRRQHGQRC) form a disordered region. The Cytoplasmic portion of the chain corresponds to 1–28 (MMEKHGGKVTSDRRAGRRQHGQRCSASD). The helical; Signal-anchor for type II membrane protein transmembrane segment at 29-49 (AAPLVVVVILIVGALFLILGP) threads the bilayer. Topologically, residues 50–449 (TGSSSFTVPR…HPTFRAARPT (400 aa)) are lumenal. A disordered region spans residues 74 to 109 (APPPPPPPAQMQAGANASSEEDSGLPPPRQLTDPPY). Asn89, Asn413, and Asn422 each carry an N-linked (GlcNAc...) asparagine glycan.

It belongs to the glycosyltransferase 34 family.

The protein resides in the golgi apparatus membrane. Functionally, probable glycosyltransferase that may be involved in the biosynthesis of xyloglucan. The chain is Probable glycosyltransferase 5 from Oryza sativa subsp. indica (Rice).